A 273-amino-acid chain; its full sequence is 4-hydroxy-tetrahydrodipicolinate reductase (273 aa).

NAD(+) contacts are provided by residues 10–15, Glu-36, 100–102, and 124–127; these read GAGGRM, GTT, and SGNM. Catalysis depends on His-157, which acts as the Proton donor/acceptor. His-158 lines the (S)-2,3,4,5-tetrahydrodipicolinate pocket. Catalysis depends on Lys-161, which acts as the Proton donor. 167 to 168 is a (S)-2,3,4,5-tetrahydrodipicolinate binding site; sequence GT.

The protein belongs to the DapB family.

The protein localises to the cytoplasm. The catalysed reaction is (S)-2,3,4,5-tetrahydrodipicolinate + NAD(+) + H2O = (2S,4S)-4-hydroxy-2,3,4,5-tetrahydrodipicolinate + NADH + H(+). It carries out the reaction (S)-2,3,4,5-tetrahydrodipicolinate + NADP(+) + H2O = (2S,4S)-4-hydroxy-2,3,4,5-tetrahydrodipicolinate + NADPH + H(+). Its pathway is amino-acid biosynthesis; L-lysine biosynthesis via DAP pathway; (S)-tetrahydrodipicolinate from L-aspartate: step 4/4. In terms of biological role, catalyzes the conversion of 4-hydroxy-tetrahydrodipicolinate (HTPA) to tetrahydrodipicolinate. This Rhodopseudomonas palustris (strain BisA53) protein is 4-hydroxy-tetrahydrodipicolinate reductase.